A 155-amino-acid polypeptide reads, in one-letter code: Protein-export protein SecB (155 aa).

It belongs to the SecB family. Homotetramer, a dimer of dimers. One homotetramer interacts with 1 SecA dimer.

Its subcellular location is the cytoplasm. One of the proteins required for the normal export of preproteins out of the cell cytoplasm. It is a molecular chaperone that binds to a subset of precursor proteins, maintaining them in a translocation-competent state. It also specifically binds to its receptor SecA. The chain is Protein-export protein SecB from Albidiferax ferrireducens (strain ATCC BAA-621 / DSM 15236 / T118) (Rhodoferax ferrireducens).